The following is a 721-amino-acid chain: DNA ligase (721 aa).

Residues 42-46 (DAEYD), 91-92 (SL), and E125 contribute to the NAD(+) site. The active-site N6-AMP-lysine intermediate is the K127. Residues R148, E184, K300, and K324 each coordinate NAD(+). Positions 430, 433, 448, and 454 each coordinate Zn(2+). Positions 642–721 (STGSPVEGKT…DAWFTLVGEE (80 aa)) constitute a BRCT domain.

Belongs to the NAD-dependent DNA ligase family. LigA subfamily. Mg(2+) serves as cofactor. Mn(2+) is required as a cofactor.

The enzyme catalyses NAD(+) + (deoxyribonucleotide)n-3'-hydroxyl + 5'-phospho-(deoxyribonucleotide)m = (deoxyribonucleotide)n+m + AMP + beta-nicotinamide D-nucleotide.. In terms of biological role, DNA ligase that catalyzes the formation of phosphodiester linkages between 5'-phosphoryl and 3'-hydroxyl groups in double-stranded DNA using NAD as a coenzyme and as the energy source for the reaction. It is essential for DNA replication and repair of damaged DNA. The protein is DNA ligase of Brucella anthropi (strain ATCC 49188 / DSM 6882 / CCUG 24695 / JCM 21032 / LMG 3331 / NBRC 15819 / NCTC 12168 / Alc 37) (Ochrobactrum anthropi).